Consider the following 113-residue polypeptide: Endoribonuclease SymE (113 aa).

Residues 29–74 (GRYPDYSRIPAITLKGQWLEVAGFATGTAVDVKVMEGCIVLTAQPP) form the SpoVT-AbrB domain.

This sequence belongs to the SymE family.

The protein localises to the cytoplasm. Functionally, involved in the degradation and recycling of damaged RNA. It is itself a target for degradation by the ATP-dependent protease Lon. The sequence is that of Endoribonuclease SymE from Escherichia coli O7:K1 (strain IAI39 / ExPEC).